We begin with the raw amino-acid sequence, 91 residues long: Chorion class B protein M3A5 (91 aa).

A central domain region spans residues 1 to 51 (VASENRYEGTVGVSGNLPFLGTADVAGEFPTAGIGEILYGCGNGAVGITRE). The tract at residues 52–91 (GGLGYGAGYGGGYGLGYGGYGGGYGLGYGGYGGCGCGCGY) is right arm (Gly-rich tandem repeats).

Belongs to the chorion protein family.

Its function is as follows. This protein is one of many from the eggshell of the silk moth. In Bombyx mori (Silk moth), this protein is Chorion class B protein M3A5.